We begin with the raw amino-acid sequence, 227 residues long: Cytidylate kinase (227 aa).

10–18 (GPASSGKST) is an ATP binding site.

The protein belongs to the cytidylate kinase family. Type 1 subfamily.

The protein resides in the cytoplasm. The enzyme catalyses CMP + ATP = CDP + ADP. It carries out the reaction dCMP + ATP = dCDP + ADP. The polypeptide is Cytidylate kinase (Streptococcus mutans serotype c (strain ATCC 700610 / UA159)).